The sequence spans 212 residues: Urease accessory protein UreG 2 (212 aa).

11-18 serves as a coordination point for GTP; that stretch reads GPVGSGKM.

This sequence belongs to the SIMIBI class G3E GTPase family. UreG subfamily. As to quaternary structure, homodimer. UreD, UreF and UreG form a complex that acts as a GTP-hydrolysis-dependent molecular chaperone, activating the urease apoprotein by helping to assemble the nickel containing metallocenter of UreC. The UreE protein probably delivers the nickel.

The protein resides in the cytoplasm. In terms of biological role, facilitates the functional incorporation of the urease nickel metallocenter. This process requires GTP hydrolysis, probably effectuated by UreG. Functionally, disrupting the ure2 operon has no effect on urease activity, or pathogen survival in BALB/c mice when inoculated by gavage, but confers slightly enhanced resistance to low pH killing in vitro. The sequence is that of Urease accessory protein UreG 2 from Brucella suis biovar 1 (strain 1330).